A 131-amino-acid chain; its full sequence is ER membrane protein complex subunit 5 (131 aa).

Topologically, residues 1 to 3 are cytoplasmic; the sequence is MAP. The chain crosses the membrane as a helical span at residues 4–22; it reads SLWKGLVGIGLFALAHAAL. Topologically, residues 23 to 43 are lumenal; the sequence is SAAQHRSYMRLTEKEDESLPI. The chain crosses the membrane as a helical span at residues 44–63; the sequence is DIVLQTLLAFAVTCYGIVHI. Residues 64-131 are Cytoplasmic-facing; the sequence is AGEFKDMDAT…KLRKLESLRR (68 aa). Phosphoserine is present on serine 120.

The protein belongs to the membrane magnesium transporter (TC 1.A.67) family. Component of the ER membrane protein complex (EMC).

It localises to the endoplasmic reticulum membrane. The protein resides in the golgi apparatus membrane. It is found in the early endosome membrane. In terms of biological role, part of the endoplasmic reticulum membrane protein complex (EMC) that enables the energy-independent insertion into endoplasmic reticulum membranes of newly synthesized membrane proteins. Preferentially accommodates proteins with transmembrane domains that are weakly hydrophobic or contain destabilizing features such as charged and aromatic residues. Involved in the cotranslational insertion of multi-pass membrane proteins in which stop-transfer membrane-anchor sequences become ER membrane spanning helices. It is also required for the post-translational insertion of tail-anchored/TA proteins in endoplasmic reticulum membranes. By mediating the proper cotranslational insertion of N-terminal transmembrane domains in an N-exo topology, with translocated N-terminus in the lumen of the ER, controls the topology of multi-pass membrane proteins like the G protein-coupled receptors. By regulating the insertion of various proteins in membranes, it is indirectly involved in many cellular processes. May be involved in Mg(2+) transport. The sequence is that of ER membrane protein complex subunit 5 from Pongo abelii (Sumatran orangutan).